Consider the following 513-residue polypeptide: MVQVFRTIAGLQTYLRQAGRGKTVGLVPTMGSLHAGHGSLLKRAVAEMDLVVLSIFVNPLQFGPGEDLEKYPRDFDGDRQWAESLGVAVIFAPTVTDLGIDAKGDQTTVLPPPAMTEVLCGAHRPGHFQGVATIVTKLFTIVCPDVAYFGAKDAQQLAIIRRLVQDLNLTVTIRSCATVREESGLAMSSRNQYLSPIEKEQATVLYRSLQAAQQRYRQGDRQVSALLTATQDVLDAEPSVQVQYLQLVEADTLQPITGTLPDQNPVLMAIAAYVGSTRLIDNLVLNHRLPIIAIDGPAGAGKSTVTRQVADGLGLTYLDTGAMYRALAWLILDQGIAPEDEPAVAELTSGAEIELMPRPAPQLTGVKVNGQDVSDAIRTPAVTQLVSTIAAQGAVRAKLLKLQRKYGDQGGIVAEGRDIGTQVFPNAELKIFLTASVQERARRRLKDFEAQGNQAVDLAQLEADIAHRDHLDSTRAIAPLQKAVDAVEIITDNLTIAEVVETIIELYKKYNKG.

The pantoate--beta-alanine ligase stretch occupies residues Met1–Leu283. Residue Met30 to His37 coordinates ATP. His37 (proton donor) is an active-site residue. (R)-pantoate is bound at residue Gln61. Gln61 contacts beta-alanine. Gly150–Asp153 provides a ligand contact to ATP. (R)-pantoate is bound at residue Gln156. Residues Val179 and Met187–Arg190 each bind ATP. The tract at residues Val284–Gly513 is cytidylate kinase.

It in the N-terminal section; belongs to the pantothenate synthetase family. This sequence in the C-terminal section; belongs to the cytidylate kinase family. Type 1 subfamily.

It is found in the cytoplasm. The enzyme catalyses (R)-pantoate + beta-alanine + ATP = (R)-pantothenate + AMP + diphosphate + H(+). It catalyses the reaction CMP + ATP = CDP + ADP. It carries out the reaction dCMP + ATP = dCDP + ADP. It participates in cofactor biosynthesis; (R)-pantothenate biosynthesis; (R)-pantothenate from (R)-pantoate and beta-alanine: step 1/1. Its function is as follows. Catalyzes the condensation of pantoate with beta-alanine in an ATP-dependent reaction via a pantoyl-adenylate intermediate. In terms of biological role, catalyzes the transfer of a phosphate group from ATP to either CMP or dCMP to form CDP or dCDP and ADP, respectively. In Synechocystis sp. (strain ATCC 27184 / PCC 6803 / Kazusa), this protein is Bifunctional pantoate ligase/cytidylate kinase.